A 201-amino-acid polypeptide reads, in one-letter code: 3-isopropylmalate dehydratase small subunit (201 aa).

Belongs to the LeuD family. LeuD type 1 subfamily. As to quaternary structure, heterodimer of LeuC and LeuD.

The enzyme catalyses (2R,3S)-3-isopropylmalate = (2S)-2-isopropylmalate. It functions in the pathway amino-acid biosynthesis; L-leucine biosynthesis; L-leucine from 3-methyl-2-oxobutanoate: step 2/4. In terms of biological role, catalyzes the isomerization between 2-isopropylmalate and 3-isopropylmalate, via the formation of 2-isopropylmaleate. The protein is 3-isopropylmalate dehydratase small subunit of Mesorhizobium japonicum (strain LMG 29417 / CECT 9101 / MAFF 303099) (Mesorhizobium loti (strain MAFF 303099)).